A 237-amino-acid polypeptide reads, in one-letter code: uncharacterized protein (237 aa).

The protein belongs to the bactofilin family.

This is an uncharacterized protein from Bacillus subtilis (strain 168).